A 479-amino-acid polypeptide reads, in one-letter code: Probable periplasmic serine endoprotease DegP-like (479 aa).

A signal peptide spans 1–27 (MSIPRMKSYFSLIAAVLMLGQVATAQA). The segment at 77–99 (LERSMPPGSRPPGAGKGDRQRET) is disordered. Active-site charge relay system residues include His-119, Asp-149, and Ser-222. Substrate-binding positions include 220-222 (GNS) and 277-281 (LGVVI). 2 consecutive PDZ domains span residues 266 to 357 (LKAS…IRDG) and 363 to 468 (TVTV…LRQG).

It belongs to the peptidase S1C family.

The protein resides in the periplasm. It catalyses the reaction Acts on substrates that are at least partially unfolded. The cleavage site P1 residue is normally between a pair of hydrophobic residues, such as Val-|-Val.. Might be efficient in the degradation of transiently denatured and unfolded proteins which accumulate in the periplasm following stress conditions. The polypeptide is Probable periplasmic serine endoprotease DegP-like (mucD) (Pseudomonas savastanoi pv. phaseolicola (strain 1448A / Race 6) (Pseudomonas syringae pv. phaseolicola (strain 1448A / Race 6))).